Here is a 283-residue protein sequence, read N- to C-terminus: D-alanine aminotransferase (283 aa).

Tyr32 is a substrate binding site. A pyridoxal 5'-phosphate-binding site is contributed by Arg51. Residues Arg99 and His101 each coordinate substrate. Residue Lys146 is the Proton acceptor of the active site. Lys146 carries the post-translational modification N6-(pyridoxal phosphate)lysine. Glu178 contacts pyridoxal 5'-phosphate.

This sequence belongs to the class-IV pyridoxal-phosphate-dependent aminotransferase family. In terms of assembly, homodimer. Pyridoxal 5'-phosphate is required as a cofactor.

It catalyses the reaction D-alanine + 2-oxoglutarate = D-glutamate + pyruvate. Acts on the D-isomers of alanine, leucine, aspartate, glutamate, aminobutyrate, norvaline and asparagine. The enzyme transfers an amino group from a substrate D-amino acid to the pyridoxal phosphate cofactor to form pyridoxamine and an alpha-keto acid in the first half-reaction. The second half-reaction is the reverse of the first, transferring the amino group from the pyridoxamine to a second alpha-keto acid to form the product D-amino acid via a ping-pong mechanism. This is an important process in the formation of D-alanine and D-glutamate, which are essential bacterial cell wall components. The polypeptide is D-alanine aminotransferase (dat) (Lysinibacillus sphaericus (Bacillus sphaericus)).